The chain runs to 492 residues: N-succinylglutamate 5-semialdehyde dehydrogenase (492 aa).

Residue 220–225 (GSANTG) participates in NAD(+) binding. Catalysis depends on residues Glu243 and Cys277.

This sequence belongs to the aldehyde dehydrogenase family. AstD subfamily.

The catalysed reaction is N-succinyl-L-glutamate 5-semialdehyde + NAD(+) + H2O = N-succinyl-L-glutamate + NADH + 2 H(+). It participates in amino-acid degradation; L-arginine degradation via AST pathway; L-glutamate and succinate from L-arginine: step 4/5. Functionally, catalyzes the NAD-dependent reduction of succinylglutamate semialdehyde into succinylglutamate. In Escherichia coli O6:H1 (strain CFT073 / ATCC 700928 / UPEC), this protein is N-succinylglutamate 5-semialdehyde dehydrogenase.